The chain runs to 272 residues: Glutamate racemase (272 aa).

Substrate-binding positions include 12-13 (DS) and 44-45 (YG). Cys75 acts as the Proton donor/acceptor in catalysis. 76 to 77 (NT) contributes to the substrate binding site. Cys185 acts as the Proton donor/acceptor in catalysis. 186 to 187 (TH) lines the substrate pocket.

This sequence belongs to the aspartate/glutamate racemases family.

The catalysed reaction is L-glutamate = D-glutamate. It functions in the pathway cell wall biogenesis; peptidoglycan biosynthesis. Its function is as follows. Provides the (R)-glutamate required for cell wall biosynthesis. The sequence is that of Glutamate racemase from Mycobacterium leprae (strain TN).